The chain runs to 190 residues: uncharacterized protein (190 aa).

The signal sequence occupies residues 1–15 (MKVFAYIALATVVAG).

Its subcellular location is the secreted. This is an uncharacterized protein from Arthroderma benhamiae (strain ATCC MYA-4681 / CBS 112371) (Trichophyton mentagrophytes).